The primary structure comprises 382 residues: GDP-mannose transporter 1 (382 aa).

Residues 1–40 are Cytoplasmic-facing; it reads MADDKKTNEYTVEMDKLDHGNKNFEAPAPAVRPRGPPAAQ. A helical membrane pass occupies residues 41–61; that stretch reads LANNPILPVLAYCGSSILMTV. Residues 62–71 are Lumenal-facing; sequence MNKYVLSGTD. Residues 72–92 form a helical membrane-spanning segment; it reads FNLNFFLLCVQSIVCIVAIQT. At 93–110 the chain is on the cytoplasmic side; that stretch reads CKSSKLITYRDFNSDEAK. A helical transmembrane segment spans residues 111 to 127; that stretch reads KWFPITLLLIGMIYTGS. The Lumenal portion of the chain corresponds to 128–134; sequence KALQYLS. A helical transmembrane segment spans residues 135-151; sequence IPVYTIFKNLTIILIAY. The Cytoplasmic segment spans residues 152 to 160; it reads GEVLWFGGS. A helical membrane pass occupies residues 161–182; the sequence is VTGMTLFSFGLMVLSSIIAAWA. Over 183–200 the chain is Lumenal; that stretch reads DIKHAVESSGDATAKVST. The chain crosses the membrane as a helical span at residues 201–221; the sequence is LNAGYIWMLINCLCTSSYVLG. Residues 222-233 are Cytoplasmic-facing; it reads MRKRIKLTNFKD. A helical transmembrane segment spans residues 234–254; that stretch reads FDTMFYNNLLSIPVLLVLTFL. The Lumenal segment spans residues 255 to 274; sequence MEDWSSANIARNFPPADRNG. A helical membrane pass occupies residues 275–295; that stretch reads ILFAMILSGLSSVFISYTSAW. The Cytoplasmic segment spans residues 296 to 303; the sequence is CVRVTSST. Residues 304–324 form a helical membrane-spanning segment; the sequence is TYSMVGALNKLPIALSGLIFF. The Lumenal portion of the chain corresponds to 325–327; it reads DAP. The chain crosses the membrane as a helical span at residues 328–348; sequence VTFPSVSAIVVGFISGIVYAV. At 349-382 the chain is on the cytoplasmic side; the sequence is AKIKQSAKPKTGVLPMSNPPVSASSQSMRDSLRS. The interval 358-382 is disordered; the sequence is KTGVLPMSNPPVSASSQSMRDSLRS. A compositionally biased stretch (polar residues) spans 367–382; sequence PPVSASSQSMRDSLRS.

Belongs to the TPT transporter family. SLC35D subfamily. Homooligomer.

The protein resides in the golgi apparatus membrane. The protein localises to the cytoplasmic vesicle membrane. It is found in the endoplasmic reticulum membrane. Involved in the import of GDP-mannose from the cytoplasm into the Golgi lumen. The polypeptide is GDP-mannose transporter 1 (gmt1) (Neosartorya fischeri (strain ATCC 1020 / DSM 3700 / CBS 544.65 / FGSC A1164 / JCM 1740 / NRRL 181 / WB 181) (Aspergillus fischerianus)).